The following is a 504-amino-acid chain: Maturase K (504 aa).

Belongs to the intron maturase 2 family. MatK subfamily.

It localises to the plastid. The protein localises to the chloroplast. In terms of biological role, usually encoded in the trnK tRNA gene intron. Probably assists in splicing its own and other chloroplast group II introns. This chain is Maturase K, found in Arabidopsis halleri.